The following is a 181-amino-acid chain: Cytochrome P450 monooxygenase dtpC (181 aa).

C125 is a heme binding site.

The protein belongs to the cytochrome P450 family. Heme is required as a cofactor.

The protein operates within alkaloid biosynthesis. It functions in the pathway secondary metabolite biosynthesis. In terms of biological role, cytochrome P450 monooxygenase; part of the gene cluster that mediates the biosynthesis of the dimeric diketopiperazine alkaloid ditryptophenaline. The nonribosomal peptide synthase dtpA accepts L-tryptophan and L-phenylalanine as its substrates and forms the phenylalanyl-tryptophanyl cyclic dipeptide product cyclophenylalanyltryptophenyl. The N-methyltransferase dtpB is responsible for the N-methylation of cyclophenylalanyltryptophenyl to yield cyclo-N-methylphenylalanyltryptophenyl. The cytochrome P450 monooxygenase is responsible not only for pyrroloindole ring formation but also for concurrent dimerization of N-methylphenylalanyltryptophanyl diketopiperazine monomers into a homodimeric product. In Aspergillus flavus (strain ATCC 200026 / FGSC A1120 / IAM 13836 / NRRL 3357 / JCM 12722 / SRRC 167), this protein is Cytochrome P450 monooxygenase dtpC.